The primary structure comprises 159 residues: 2-C-methyl-D-erythritol 2,4-cyclodiphosphate synthase (159 aa).

Positions 8 and 10 each coordinate a divalent metal cation. 4-CDP-2-C-methyl-D-erythritol 2-phosphate contacts are provided by residues 8–10 and 34–35; these read DVH and HS. His42 contacts a divalent metal cation. Residues 56 to 58, 61 to 65, 132 to 135, Phe139, and Arg142 contribute to the 4-CDP-2-C-methyl-D-erythritol 2-phosphate site; these read DIG, FPDTD, and TTTE.

It belongs to the IspF family. As to quaternary structure, homotrimer. Requires a divalent metal cation as cofactor.

It catalyses the reaction 4-CDP-2-C-methyl-D-erythritol 2-phosphate = 2-C-methyl-D-erythritol 2,4-cyclic diphosphate + CMP. It participates in isoprenoid biosynthesis; isopentenyl diphosphate biosynthesis via DXP pathway; isopentenyl diphosphate from 1-deoxy-D-xylulose 5-phosphate: step 4/6. Involved in the biosynthesis of isopentenyl diphosphate (IPP) and dimethylallyl diphosphate (DMAPP), two major building blocks of isoprenoid compounds. Catalyzes the conversion of 4-diphosphocytidyl-2-C-methyl-D-erythritol 2-phosphate (CDP-ME2P) to 2-C-methyl-D-erythritol 2,4-cyclodiphosphate (ME-CPP) with a corresponding release of cytidine 5-monophosphate (CMP). The protein is 2-C-methyl-D-erythritol 2,4-cyclodiphosphate synthase of Finegoldia magna (strain ATCC 29328 / DSM 20472 / WAL 2508) (Peptostreptococcus magnus).